We begin with the raw amino-acid sequence, 305 residues long: Probable branched-chain-amino-acid aminotransferase (305 aa).

Position 156 is an N6-(pyridoxal phosphate)lysine (Lys-156).

The protein belongs to the class-IV pyridoxal-phosphate-dependent aminotransferase family. It depends on pyridoxal 5'-phosphate as a cofactor.

The catalysed reaction is L-leucine + 2-oxoglutarate = 4-methyl-2-oxopentanoate + L-glutamate. It catalyses the reaction L-isoleucine + 2-oxoglutarate = (S)-3-methyl-2-oxopentanoate + L-glutamate. The enzyme catalyses L-valine + 2-oxoglutarate = 3-methyl-2-oxobutanoate + L-glutamate. The protein operates within amino-acid biosynthesis; L-isoleucine biosynthesis; L-isoleucine from 2-oxobutanoate: step 4/4. Its pathway is amino-acid biosynthesis; L-leucine biosynthesis; L-leucine from 3-methyl-2-oxobutanoate: step 4/4. It participates in amino-acid biosynthesis; L-valine biosynthesis; L-valine from pyruvate: step 4/4. Functionally, acts on leucine, isoleucine and valine. This chain is Probable branched-chain-amino-acid aminotransferase (ilvE), found in Synechocystis sp. (strain ATCC 27184 / PCC 6803 / Kazusa).